The following is a 327-amino-acid chain: MKRLLPTLRADQTSESLISVINTIQIAAKEISFRLHQGALAGVLGSTLDENIQGETQKKLDVVANQLLKTLLLESPNVHAVASEEEDSIVESPNSGHYLVAFDPLDGSSNIDINGGVGTIFSILRKPEGEETSENMFLQPGKAQVAAGYVLYGPATMLVMTTGKAVRIYTLDQTVGEFLLTHEKAEIPKDTKEFAINMSNRRHWADPIRAYISDLLEGEEGPRGKNFNMRWNAAMVSDVHRVISRGGLFTYPWDARKPEKPFKLRLLYEAAPMAMLVEKAGGKATDGYSRLMEIVPEHIHQRVSVVMGSANEVDVCMDYHKQHPKPY.

Mg(2+) is bound by residues E84, D103, L105, and D106. Residues 106–109, N197, and K263 each bind substrate; that span reads DGSS. Mg(2+) is bound at residue E269.

This sequence belongs to the FBPase class 1 family. As to quaternary structure, homotetramer. It depends on Mg(2+) as a cofactor.

It localises to the cytoplasm. The enzyme catalyses beta-D-fructose 1,6-bisphosphate + H2O = beta-D-fructose 6-phosphate + phosphate. It functions in the pathway carbohydrate biosynthesis; gluconeogenesis. The sequence is that of Fructose-1,6-bisphosphatase class 1 from Idiomarina loihiensis (strain ATCC BAA-735 / DSM 15497 / L2-TR).